Consider the following 358-residue polypeptide: Feruloyl CoA ortho-hydroxylase F6H1-3 (358 aa).

Residues 200-308 (TKESLLMGSK…RISVPIFVNP (109 aa)) form the Fe2OG dioxygenase domain. Tyrosine 216 lines the 2-oxoglutarate pocket. Histidine 231, aspartate 233, and histidine 289 together coordinate Fe cation. Residues arginine 299 and serine 301 each contribute to the 2-oxoglutarate site.

The protein belongs to the iron/ascorbate-dependent oxidoreductase family. L-ascorbate is required as a cofactor. Fe(2+) serves as cofactor. Mostly expressed in tubers, and, at low levels, in underground stems, stems, leaves and petioles.

The enzyme catalyses (E)-feruloyl-CoA + 2-oxoglutarate + O2 = (E)-6-hydroxyferuloyl-CoA + succinate + CO2. It functions in the pathway phenylpropanoid metabolism. Its function is as follows. 2-oxoglutarate (OG)- and Fe(II)-dependent dioxygenase (2OGD) involved in scopoletin biosynthesis. Converts feruloyl CoA into 6'-hydroxyferuloyl CoA, and, at low efficiency, caffeoyl-CoA into 6'-hydroxycaffeate, but has no activity with p-coumaroyl-CoA. The chain is Feruloyl CoA ortho-hydroxylase F6H1-3 from Ipomoea batatas (Sweet potato).